The chain runs to 300 residues: Protoheme IX farnesyltransferase 1 (300 aa).

Transmembrane regions (helical) follow at residues 26–46 (VVVL…RAGV), 48–68 (WTVL…AAAV), 97–117 (AALA…LTFT), 120–140 (LTAW…TGFL), 148–168 (IVIG…AATG), 174–194 (PLLL…ALAI), 226–246 (FALL…VLYL), and 280–300 (IYYL…LLNL).

The protein belongs to the UbiA prenyltransferase family. Protoheme IX farnesyltransferase subfamily.

Its subcellular location is the cell inner membrane. The enzyme catalyses heme b + (2E,6E)-farnesyl diphosphate + H2O = Fe(II)-heme o + diphosphate. The protein operates within porphyrin-containing compound metabolism; heme O biosynthesis; heme O from protoheme: step 1/1. Its function is as follows. Converts heme B (protoheme IX) to heme O by substitution of the vinyl group on carbon 2 of heme B porphyrin ring with a hydroxyethyl farnesyl side group. This chain is Protoheme IX farnesyltransferase 1, found in Pseudomonas fluorescens (strain ATCC BAA-477 / NRRL B-23932 / Pf-5).